The primary structure comprises 71 residues: Ubiquinol-cytochrome c reductase complex assembly factor 6 (71 aa).

At methionine 1–serine 8 the chain is on the mitochondrial matrix side. A helical; Signal-anchor for type II membrane protein transmembrane segment spans residues threonine 9–alanine 25. At glutamate 26 to lysine 71 the chain is on the mitochondrial intermembrane side. Residues leucine 52 to lysine 71 form a disordered region.

Belongs to the UQCC6 family. Interacts with UQCRC1. Interacts with UQCRQ. Interacts with UQCC5. Forms a complex, named COMB/coordinator of mitochondrial CYTB biogenesis, composed of UQCC1, UQCC2, UQCC4, UQCC5 and UQCC6; stabilizes nascent cytochrome b/MT-CYB and promotes its membrane insertion. Forms a complex, named COMA, composed of UQCC1, UQCC2 and UQCC4; activates MT-CYB translation. Forms a complex, named COMC, composed of UQCC1, UQCC2; UQCC3 and UQCC4; mediates MT-CYB hemylation and association with the first nuclear-encoded complex III subunit UQCRQ. Interacts with MT-CYB.

The protein resides in the mitochondrion inner membrane. Required for the assembly and stability of the mitochondrial ubiquinol-cytochrome c reductase complex (complex III (CIII) or cytochrome b-c1 complex), a multisubunit transmembrane complex that is part of the mitochondrial electron transport chain (ETC) which drives oxidative phosphorylation. Mediates early complex III biogenesis. Participates in regulating the levels of electron transport chain proteins, and therefore energy supply, in response to changes in energy demand. Also required for cytochrome c oxidase complex (complex IV) assembly. This Pongo abelii (Sumatran orangutan) protein is Ubiquinol-cytochrome c reductase complex assembly factor 6.